Here is a 159-residue protein sequence, read N- to C-terminus: uncharacterized protein (159 aa).

The next 2 helical transmembrane spans lie at Ala-17–Val-37 and Leu-40–Tyr-60.

It is found in the cell membrane. This is an uncharacterized protein from Borreliella burgdorferi (strain ATCC 35210 / DSM 4680 / CIP 102532 / B31) (Borrelia burgdorferi).